The following is a 782-amino-acid chain: E3 UFM1-protein ligase 1 homolog (782 aa).

A disordered region spans residues Val-405–Lys-478.

This sequence belongs to the UFL1 family.

E3 UFM1-protein ligase that mediates ufmylation of target proteins. In Drosophila sechellia (Fruit fly), this protein is E3 UFM1-protein ligase 1 homolog.